We begin with the raw amino-acid sequence, 310 residues long: UPF0761 membrane protein VFMJ11_0098 (310 aa).

6 helical membrane passes run 34 to 54, 97 to 117, 136 to 156, 178 to 198, 207 to 227, and 242 to 262; these read YMAY…LSVL, MTAV…SSID, FSLY…SLAA, LLGW…YLLV, HALI…VGFA, and ALAA…IVLI.

It belongs to the UPF0761 family.

The protein localises to the cell inner membrane. This Aliivibrio fischeri (strain MJ11) (Vibrio fischeri) protein is UPF0761 membrane protein VFMJ11_0098.